The chain runs to 951 residues: Serine/threonine-protein phosphatase 4 regulatory subunit 1 (951 aa).

HEAT repeat units follow at residues 26-63 (ESDV…VFNR), 82-119 (RDCI…FCQE), 127-164 (AFSK…QELI), 168-206 (DVET…MVGK), 208-246 (ITER…VVGQ), 248-285 (ATEE…ATCQ), and 287-324 (IRRT…TFAN). 4 disordered regions span residues 326 to 395 (SSSG…DMRV), 407 to 501 (SESP…MATR), 539 to 569 (HDEA…SISE), and 592 to 612 (GGAD…ERRP). 3 stretches are compositionally biased toward basic and acidic residues: residues 332 to 360 (FKDE…RPED), 464 to 483 (DLDK…ERTG), and 539 to 551 (HDEA…RSEL). One copy of the HEAT 8 repeat lies at 502–539 (KELEEMIENLEPHMDDPDVKAQVEVLSAALRASTLDAH). A compositionally biased stretch (gly residues) spans 594–604 (ADVGPGGGGGF). 4 HEAT repeats span residues 699–735 (LTAA…LLHI), 777–815 (RDVY…KLHM), 820–858 (TFGV…DDCL), and 862–899 (QFAV…EKEY). Ser936 carries the post-translational modification Phosphoserine.

Serine/threonine-protein phosphatase 4 (PP4) occurs in different assemblies of the catalytic and one or more regulatory subunits. Component of the PP4 complex PPP4C-PPP4R1. Interacts with HDAC3.

Functionally, regulatory subunit of serine/threonine-protein phosphatase 4. May play a role in regulation of cell division in renal glomeruli. The PPP4C-PPP4R1 PP4 complex may play a role in dephosphorylation and regulation of HDAC3. Plays a role in the inhibition of TNF-induced NF-kappa-B activation by regulating the dephosphorylation of TRAF2. This is Serine/threonine-protein phosphatase 4 regulatory subunit 1 (Ppp4r1) from Rattus norvegicus (Rat).